The sequence spans 108 residues: Protein ORFa in retron Ec67 (108 aa).

In Escherichia coli, this protein is Protein ORFa in retron Ec67.